The chain runs to 132 residues: Neurophysin 2 (132 aa).

7 disulfides stabilise this stretch: Cys10–Cys54, Cys13–Cys27, Cys21–Cys44, Cys28–Cys34, Cys61–Cys73, Cys67–Cys85, and Cys74–Cys79.

The protein belongs to the vasopressin/oxytocin family.

It is found in the secreted. Its function is as follows. Neurophysin 2 specifically binds vasopressin. This is Neurophysin 2 from Struthio camelus (Common ostrich).